The following is a 99-amino-acid chain: Cysteine-rich C-terminal protein 1 (99 aa).

2 disordered regions span residues M1–S42 and R65–C99. Residues A22–A32 are compositionally biased toward pro residues. Low complexity predominate over residues Q83–C99.

In Homo sapiens (Human), this protein is Cysteine-rich C-terminal protein 1 (CRCT1).